The chain runs to 319 residues: tRNA (guanine-N(7)-)-methyltransferase (319 aa).

S-adenosyl-L-methionine-binding residues include Glu28, Glu51, and Asp75. Residues Asp134 and 167 to 170 each bind substrate; that span reads TKYE.

This sequence belongs to the class I-like SAM-binding methyltransferase superfamily. TrmB family.

The enzyme catalyses guanosine(46) in tRNA + S-adenosyl-L-methionine = N(7)-methylguanosine(46) in tRNA + S-adenosyl-L-homocysteine. It functions in the pathway tRNA modification; N(7)-methylguanine-tRNA biosynthesis. Functionally, catalyzes the formation of N(7)-methylguanine at position 46 (m7G46) in tRNA. This is tRNA (guanine-N(7)-)-methyltransferase from Coprothermobacter proteolyticus (strain ATCC 35245 / DSM 5265 / OCM 4 / BT).